The chain runs to 192 residues: Probable nicotinate-nucleotide adenylyltransferase (192 aa).

The protein belongs to the NadD family.

It carries out the reaction nicotinate beta-D-ribonucleotide + ATP + H(+) = deamido-NAD(+) + diphosphate. The protein operates within cofactor biosynthesis; NAD(+) biosynthesis; deamido-NAD(+) from nicotinate D-ribonucleotide: step 1/1. Functionally, catalyzes the reversible adenylation of nicotinate mononucleotide (NaMN) to nicotinic acid adenine dinucleotide (NaAD). The protein is Probable nicotinate-nucleotide adenylyltransferase of Cereibacter sphaeroides (strain ATCC 17029 / ATH 2.4.9) (Rhodobacter sphaeroides).